A 120-amino-acid chain; its full sequence is MFLLHEYDIFWAFLIISSVIPILAFLISGVLAPINEGPEKLSSYESGIEPMGDAWLQFRIRYYMFALVFVVFDVETVFLYPWAMSFDVLGVSVFVEALIFVLILIVGLVYAWRKGALEWS.

A run of 3 helical transmembrane segments spans residues 9–29, 64–84, and 88–108; these read IFWA…LISG, MFAL…PWAM, and VLGV…IVGL.

The protein belongs to the complex I subunit 3 family. NDH is composed of at least 16 different subunits, 5 of which are encoded in the nucleus.

It localises to the plastid. It is found in the chloroplast thylakoid membrane. The catalysed reaction is a plastoquinone + NADH + (n+1) H(+)(in) = a plastoquinol + NAD(+) + n H(+)(out). It catalyses the reaction a plastoquinone + NADPH + (n+1) H(+)(in) = a plastoquinol + NADP(+) + n H(+)(out). Functionally, NDH shuttles electrons from NAD(P)H:plastoquinone, via FMN and iron-sulfur (Fe-S) centers, to quinones in the photosynthetic chain and possibly in a chloroplast respiratory chain. The immediate electron acceptor for the enzyme in this species is believed to be plastoquinone. Couples the redox reaction to proton translocation, and thus conserves the redox energy in a proton gradient. This is NAD(P)H-quinone oxidoreductase subunit 3, chloroplastic from Ranunculus macranthus (Large buttercup).